The chain runs to 570 residues: Proline--tRNA ligase (570 aa).

This sequence belongs to the class-II aminoacyl-tRNA synthetase family. ProS type 1 subfamily. Homodimer.

The protein localises to the cytoplasm. The enzyme catalyses tRNA(Pro) + L-proline + ATP = L-prolyl-tRNA(Pro) + AMP + diphosphate. Its function is as follows. Catalyzes the attachment of proline to tRNA(Pro) in a two-step reaction: proline is first activated by ATP to form Pro-AMP and then transferred to the acceptor end of tRNA(Pro). As ProRS can inadvertently accommodate and process non-cognate amino acids such as alanine and cysteine, to avoid such errors it has two additional distinct editing activities against alanine. One activity is designated as 'pretransfer' editing and involves the tRNA(Pro)-independent hydrolysis of activated Ala-AMP. The other activity is designated 'posttransfer' editing and involves deacylation of mischarged Ala-tRNA(Pro). The misacylated Cys-tRNA(Pro) is not edited by ProRS. In Clostridium perfringens (strain ATCC 13124 / DSM 756 / JCM 1290 / NCIMB 6125 / NCTC 8237 / Type A), this protein is Proline--tRNA ligase.